The following is a 96-amino-acid chain: Protein RnfH (96 aa).

Belongs to the UPF0125 (RnfH) family.

The polypeptide is Protein RnfH (Citrobacter koseri (strain ATCC BAA-895 / CDC 4225-83 / SGSC4696)).